A 163-amino-acid polypeptide reads, in one-letter code: Small ribosomal subunit protein uS5 (163 aa).

The 64-residue stretch at 8–71 (LIEKIVDLNR…ERAKKGMVQV (64 aa)) folds into the S5 DRBM domain.

Belongs to the universal ribosomal protein uS5 family. As to quaternary structure, part of the 30S ribosomal subunit. Contacts proteins S4 and S8.

Its function is as follows. With S4 and S12 plays an important role in translational accuracy. Functionally, located at the back of the 30S subunit body where it stabilizes the conformation of the head with respect to the body. This is Small ribosomal subunit protein uS5 from Oleidesulfovibrio alaskensis (strain ATCC BAA-1058 / DSM 17464 / G20) (Desulfovibrio alaskensis).